We begin with the raw amino-acid sequence, 352 residues long: N-lysine methyltransferase KMT5A (352 aa).

The disordered stretch occupies residues 21–51 (AVAATAPGPEMVERRGPGRPRTNGENVFTGQ). At Ser-59 the chain carries Phosphoserine. Residues 87–202 (PLAGIYRKRD…KSKAELQSEE (116 aa)) are disordered. Positions 109-121 (MKAEEQKIKDARR) are enriched in basic and acidic residues. Thr-140 carries the phosphothreonine modification. A compositionally biased stretch (basic residues) spans 156-172 (GLKKPVRGKQAPRKKAQ). An SET domain is found at 216–337 (EGMKIDLIDG…AGEELLYDYG (122 aa)). S-adenosyl-L-methionine-binding positions include 226–228 (KGR), Tyr-271, and 298–299 (NH).

It belongs to the class V-like SAM-binding methyltransferase superfamily. Histone-lysine methyltransferase family. PR/SET subfamily. In terms of assembly, interacts with L3MBTL1. Interacts with SIRT2 (phosphorylated form); the interaction is direct, stimulates KMT5A-mediated methyltransferase activity at histone H4 'Lys-20' (H4K20me1) and is increased in a H(2)O(2)-induced oxidative stress-dependent manner. In terms of processing, ubiquitinated and degraded by the DCX(DTL) complex.

It is found in the nucleus. It localises to the chromosome. The enzyme catalyses L-lysyl(20)-[histone H4] + S-adenosyl-L-methionine = N(6)-methyl-L-lysyl(20)-[histone H4] + S-adenosyl-L-homocysteine + H(+). The catalysed reaction is L-lysyl-[protein] + S-adenosyl-L-methionine = N(6)-methyl-L-lysyl-[protein] + S-adenosyl-L-homocysteine + H(+). In terms of biological role, protein-lysine N-methyltransferase that monomethylates both histones and non-histone proteins. Specifically monomethylates 'Lys-20' of histone H4 (H4K20me1). H4K20me1 is enriched during mitosis and represents a specific tag for epigenetic transcriptional repression. Mainly functions in euchromatin regions, thereby playing a central role in the silencing of euchromatic genes. Required for cell proliferation, probably by contributing to the maintenance of proper higher-order structure of DNA during mitosis. Involved in chromosome condensation and proper cytokinesis. Nucleosomes are preferred as substrate compared to free histones. Mediates monomethylation of p53/TP53 at 'Lys-382', leading to repress p53/TP53-target genes. Plays a negative role in TGF-beta response regulation and a positive role in cell migration. The sequence is that of N-lysine methyltransferase KMT5A from Bos taurus (Bovine).